The following is a 143-amino-acid chain: MSSWRKAKKSEQKHRLKRIARTRVQAFARDVRISAHKARRVIDQIRGRSYVETLTLLELMPYRASYPIFKLLYSAAASASHNLGFKEADSYISKAEVNEGAVLKRLKPRARGRSYLIKKPTCHITIVLKDRTLNEMSTPTSLS.

The protein belongs to the universal ribosomal protein uL22 family. In terms of assembly, part of the 50S ribosomal subunit.

Its subcellular location is the plastid. The protein localises to the chloroplast. In terms of biological role, this protein binds specifically to 23S rRNA. Functionally, the globular domain of the protein is located near the polypeptide exit tunnel on the outside of the subunit, while an extended beta-hairpin is found that lines the wall of the exit tunnel in the center of the 70S ribosome. The polypeptide is Large ribosomal subunit protein uL22c (rpl22) (Piper cenocladum (Ant piper)).